The following is a 525-amino-acid chain: RNA-directed RNA polymerase (525 aa).

Residues 72–272 form the RdRp catalytic domain; the sequence is LVYADNIYIV…DKERLFCSAA (201 aa).

In terms of assembly, interacts with VP3 in the cytoplasm. Post-translationally, may exist in multiple phosphorylated forms.

The protein resides in the virion. The enzyme catalyses RNA(n) + a ribonucleoside 5'-triphosphate = RNA(n+1) + diphosphate. Functionally, RNA-dependent RNA polymerase which is found both free and covalently attached to the genomic RNA. May also contain guanylyl and methyl transferase activities. The chain is RNA-directed RNA polymerase (VP1) from Gallus gallus (Chicken).